Here is a 327-residue protein sequence, read N- to C-terminus: Protein hunchback (327 aa).

3 consecutive C2H2-type zinc fingers follow at residues 1–5 (HMRNH), 11–33 (FQCSQCSYSCVNKSMLNSHLKSH), and 39–63 (YRCADCNYATKYCHSLKLHLRKYQH). 3 disordered regions span residues 91-121 (KQKPFSKMFEPQGPVSNNNQPQPPAPTHPIF), 143-170 (PPNNNYEQRTSPKNHEIQTEKPQQMSPP), and 182-290 (ERPL…EVAS). 2 stretches are compositionally biased toward basic and acidic residues: residues 205-216 (THREMPTEHGDD) and 265-276 (LQHEDEKMRDAD). 2 C2H2-type zinc fingers span residues 297-319 (YTCQFCDITFGDLTMHTIHMGFH) and 325-327 (FMC).

It belongs to the hunchback C2H2-type zinc-finger protein family.

The protein resides in the nucleus. Functionally, gap class segmentation protein that controls development of head structures. In Manduca sexta (Tobacco hawkmoth), this protein is Protein hunchback (hb).